The following is a 113-amino-acid chain: DNA-directed RNA polymerase subunit omega (113 aa).

Belongs to the RNA polymerase subunit omega family. In terms of assembly, the RNAP catalytic core consists of 2 alpha, 1 beta, 1 beta' and 1 omega subunit. When a sigma factor is associated with the core the holoenzyme is formed, which can initiate transcription.

It catalyses the reaction RNA(n) + a ribonucleoside 5'-triphosphate = RNA(n+1) + diphosphate. Its function is as follows. Promotes RNA polymerase assembly. Latches the N- and C-terminal regions of the beta' subunit thereby facilitating its interaction with the beta and alpha subunits. This is DNA-directed RNA polymerase subunit omega from Rhizorhabdus wittichii (strain DSM 6014 / CCUG 31198 / JCM 15750 / NBRC 105917 / EY 4224 / RW1) (Sphingomonas wittichii).